A 214-amino-acid chain; its full sequence is ATP-dependent Clp protease proteolytic subunit (214 aa).

The active-site Nucleophile is the serine 110. Histidine 135 is a catalytic residue.

Belongs to the peptidase S14 family. As to quaternary structure, fourteen ClpP subunits assemble into 2 heptameric rings which stack back to back to give a disk-like structure with a central cavity, resembling the structure of eukaryotic proteasomes.

It is found in the cytoplasm. It carries out the reaction Hydrolysis of proteins to small peptides in the presence of ATP and magnesium. alpha-casein is the usual test substrate. In the absence of ATP, only oligopeptides shorter than five residues are hydrolyzed (such as succinyl-Leu-Tyr-|-NHMec, and Leu-Tyr-Leu-|-Tyr-Trp, in which cleavage of the -Tyr-|-Leu- and -Tyr-|-Trp bonds also occurs).. Its function is as follows. Cleaves peptides in various proteins in a process that requires ATP hydrolysis. Has a chymotrypsin-like activity. Plays a major role in the degradation of misfolded proteins. The protein is ATP-dependent Clp protease proteolytic subunit of Legionella pneumophila (strain Corby).